The chain runs to 417 residues: Tumor necrosis factor receptor superfamily member 25 (417 aa).

A signal peptide spans 1–24 (MEQRPRGCAAVAAALLLVLLGARA). Topologically, residues 25–199 (QGGTRSPRCD…RCAAVCGWRQ (175 aa)) are extracellular. TNFR-Cys repeat units follow at residues 34 to 71 (DCAGDFHKKIGLFCCRGCPAGHYLKAPCTEPCGNSTCL), 72 to 115 (VCPQ…DTRC), 116 to 163 (GCKP…TDCG), and 164 to 192 (TCLPGFYEHGDGCVSCPTSTLGSCPERCA). Cystine bridges form between C35–C47, C48–C61, C51–C70, C73–C89, C92–C107, C95–C115, C117–C130, C138–C155, C141–C162, C165–C176, C179–C191, and C187–C195. N-linked (GlcNAc...) asparagine glycosylation is present at N67. Residue N106 is glycosylated (N-linked (GlcNAc...) asparagine). A helical transmembrane segment spans residues 200–220 (MFWVQVLLAGLVVPLLLGATL). Residues 221–417 (TYTYRHCWPH…DLRSRLQRGP (197 aa)) are Cytoplasmic-facing. Residues 332–413 (GPQLYDVMDA…GCVEDLRSRL (82 aa)) enclose the Death domain. Residue R352 is glycosylated ((Microbial infection) N-beta-linked (GlcNAc) arginine).

As to quaternary structure, homodimer. Interacts strongly via the death domains with TNFRSF1 and TRADD to activate at least two distinct signaling cascades, apoptosis and NF-kappa-B signaling. Interacts with BAG4. (Microbial infection) Glycosylated at Arg-352 by enteropathogenic E.coli protein NleB1. In terms of processing, glycosylated. Abundantly expressed in thymocytes and lymphocytes. Detected in lymphocyte-rich tissues such as thymus, colon, intestine, and spleen. Also found in the prostate.

Its subcellular location is the cell membrane. It is found in the secreted. Its function is as follows. Receptor for TNFSF12/APO3L/TWEAK. Interacts directly with the adapter TRADD. Mediates activation of NF-kappa-B and induces apoptosis. May play a role in regulating lymphocyte homeostasis. This Homo sapiens (Human) protein is Tumor necrosis factor receptor superfamily member 25 (TNFRSF25).